A 243-amino-acid polypeptide reads, in one-letter code: Probable transcriptional regulatory protein LCABL_11860 (243 aa).

The interval 1-23 is disordered; that stretch reads MSGHSKWHNIQGRKNAQDSKRGK.

The protein belongs to the TACO1 family.

Its subcellular location is the cytoplasm. The chain is Probable transcriptional regulatory protein LCABL_11860 from Lacticaseibacillus casei (strain BL23) (Lactobacillus casei).